The primary structure comprises 81 residues: Conotoxin ArMKLT2-01 (81 aa).

An N-terminal signal peptide occupies residues Met1–Ala19. Positions Lys20–Ala43 are excised as a propeptide. Cystine bridges form between Cys46–Cys61, Cys53–Cys65, and Cys60–Cys74.

The protein belongs to the conotoxin O1 superfamily. As to expression, expressed by the venom duct.

The protein resides in the secreted. In Conus arenatus (Sand-dusted cone), this protein is Conotoxin ArMKLT2-01.